The following is a 560-amino-acid chain: Arginine--tRNA ligase (560 aa).

The 'HIGH' region motif lies at 164–174; that stretch reads FYYNDAGNQID.

It belongs to the class-I aminoacyl-tRNA synthetase family. In terms of assembly, monomer.

The protein localises to the cytoplasm. The catalysed reaction is tRNA(Arg) + L-arginine + ATP = L-arginyl-tRNA(Arg) + AMP + diphosphate. The sequence is that of Arginine--tRNA ligase from Bordetella pertussis (strain Tohama I / ATCC BAA-589 / NCTC 13251).